The primary structure comprises 233 residues: RNA/RNP complex-1-interacting phosphatase homolog (233 aa).

Residues 1–14 (MSNYHHNHNYQHRP) show a composition bias toward basic residues. The tract at residues 1 to 21 (MSNYHHNHNYQHRPRGYERLP) is disordered. The Tyrosine-protein phosphatase domain occupies 34–206 (NVGRDIDGTR…LYEAERKKKY (173 aa)). Cys-150 functions as the Phosphocysteine intermediate in the catalytic mechanism. Position 151 to 156 (151 to 156 (THGLNR)) interacts with substrate. Arg-156 acts as the Proton donor/acceptor in catalysis. The segment at 204 to 233 (KKYGKSSGKSSGNSADSTISSEQLHRNNSQ) is disordered. The segment covering 208–217 (KSSGKSSGNS) has biased composition (low complexity). The segment covering 218 to 233 (ADSTISSEQLHRNNSQ) has biased composition (polar residues).

It belongs to the protein-tyrosine phosphatase family. Non-receptor class dual specificity subfamily. In terms of assembly, interacts with the ERI/DICER complex component dcr-1. Interacts with ERI/DICER complex components rrf-3 and isoform b of eri-1. Interacts with drh-3 and rde-8.

Its subcellular location is the cytoplasm. It is found in the nucleus. Its function is as follows. RNA polyphosphatase which has RNA 5'-triphosphatase and diphosphatase activities. Displays poor protein-tyrosine phosphatase activity. Binds to 5'-triphosphorylated RNAs (also called ppp-RNAs). Dephosphorylates ppp-RNAs converting them to 5'-monophosphorylated RNAs (also called p-RNAs). During small-RNA-mediated gene-silencing or RNA interference (RNAi), involved in the dcr-1-mediated processing of an amplified dsRNA intermediate. This is most likely in association with several components of the ERI/DICER complex including dcr-1, eri-1 and rrf-3. Plays a role in the biogenesis of 26G small interfering RNAs (26G-siRNAs), which are a class of 26 nucleotide siRNAs that possess a guanine residue at the 5'-end, by dephosphorylating 5'-triphosphorylated 26G-siRNAs prior to their maturation by the ERI/DICER complex. Plays a role in the biogenesis of csr-1-bound 22G small interfering RNAs (22G-siRNAs), which are a class of 22 nucleotide siRNAs that possess a guanine residue at the 5'-end. Not required for the biogenesis of microRNAs (miRNA) or for the biogenesis of a class of 21 nucleotide PIWI-interacting RNAs (piRNAs) that possess a uracil residue at the 5'-end (also called 21U-RNAs). This chain is RNA/RNP complex-1-interacting phosphatase homolog, found in Caenorhabditis elegans.